The sequence spans 312 residues: Pre-mRNA-splicing factor 38A (312 aa).

An N-terminal protein interaction domain region spans residues 1–179; that stretch reads MANRTVKDAH…VLEETEQLDP (179 aa). Residues 180–312 form a disordered region; sequence RVSALEEDMD…SHKKSRRGNE (133 aa). Positions 184–201 are enriched in acidic residues; sequence LEEDMDDVESSEEEEDDD. Residues 202-223 are compositionally biased toward basic and acidic residues; the sequence is EKGRDPSPEHHRRNYRDLDRPR. 2 stretches are compositionally biased toward basic residues: residues 224–294 and 301–312; these read RSPS…RSHS and KKSHKKSRRGNE.

The protein belongs to the PRP38 family. As to quaternary structure, component of the spliceosome B complex.

The protein localises to the nucleus. Its function is as follows. Involved in pre-mRNA splicing as a component of the spliceosome. This chain is Pre-mRNA-splicing factor 38A (prpf38a), found in Xenopus laevis (African clawed frog).